The sequence spans 314 residues: DDRGK domain-containing protein 1 (314 aa).

A helical transmembrane segment spans residues 1 to 28; it reads MVAPVWYLVAAALLVGFILFLTRSRGRA. The tract at residues 1 to 114 is mediates interaction with CDK5RAP3; it reads MVAPVWYLVA…VEKPAETHLS (114 aa). The Cytoplasmic segment spans residues 29–314; that stretch reads ASAGQEPLHN…GRESPAQAPA (286 aa). Disordered regions lie at residues 31–75 and 100–186; these read AGQE…SRLQ and QEEE…QREH. A phosphoserine mark is found at Ser72 and Ser114. A mediates interaction with TRIP4 region spans residues 118–216; sequence GAKKLRKLEE…MTEEQSQSFL (99 aa). Residues 124–186 show a composition bias toward basic and acidic residues; that stretch reads KLEEKQARKA…AREEQAQREH (63 aa). Positions 195–209 match the UFM1-interacting motif (UFIM) motif; the sequence is AFVVEEEGVGETMTE. Positions 216–314 are mediates interaction with UFL1; the sequence is LTEFINYIKQ…GRESPAQAPA (99 aa). The PCI domain maps to 229-273; that stretch reads VLLEDLASQVGLRTQDTINRIQDLLAEGTITGVIDDRGKFIYITP. Residue Lys267 forms a Glycyl lysine isopeptide (Lys-Gly) (interchain with G-Cter in UFM1) linkage.

The protein belongs to the DDRGK1 family. Component of the UFM1 ribosome E3 ligase (UREL) complex, composed of UFL1, DDRGK1 and CDK5RAP3. Interacts with (unphosphorylated) ERN1/IRE1-alpha; interaction is dependent on UFM1 and takes place in response to endoplasmic reticulum stress, regulating ERN1/IRE1-alpha stability. Interacts with NFKBIA. Interacts with SOX9. Post-translationally, ubiquitinated. Ubiquitination probably triggers proteasomal degradation and is negatively regulated by UFL1, the enzyme involved in the ufmylation of DDRGK1. Ufmylated; conjugated to ubiquitin-like protein UFM1, probably at Lys-267 by UFL1. The relevance of ufmylation is however unclear: as DDRGK1 acts as a substrate adapters for ufmylation, it is uncertain whether ufmylation is a collateral effect of ufmylation process or is required to regulate its activity. In terms of tissue distribution, widely expressed (at protein level). In the brain, highest levels in medulla oblongata, followed by cerebral cortex, cerebellum and frontal lobe.

It is found in the endoplasmic reticulum membrane. Its function is as follows. Component of the UFM1 ribosome E3 ligase (UREL) complex, a multiprotein complex that catalyzes ufmylation of endoplasmic reticulum-docked proteins. The UREL complex plays a key role in ribosome recycling by mediating mono-ufmylation of the RPL26/uL24 subunit of the 60S ribosome following ribosome dissociation: ufmylation weakens the junction between post-termination 60S subunits and SEC61 translocons, promoting release and recycling of the large ribosomal subunit from the endoplasmic reticulum membrane. Ufmylation of RPL26/uL24 and subsequent 60S ribosome recycling either take place after normal termination of translation or after ribosome stalling during cotranslational translocation at the endoplasmic reticulum. Within the UREL complex, DDRGK1 tethers the complex to the endoplasmic reticulum membrane to restrict its activity to endoplasmic reticulum-docked ribosomes and acts as an ufmylation 'reader': following RPL26/uL24 ufmylation, DDRGK1 specifically binds to ufmylated RPL26/uL24 via its UFIM motif, resulting in stable association between the 60S ribosome and the UREL complex, followed by dissociation of the 60S ribosome subunit from the endoplasmic reticulum membrane. The UREL complex is also involved in reticulophagy in response to endoplasmic reticulum stress by promoting ufmylation of proteins such as CYB5R3 and RPN1, thereby promoting lysosomal degradation of ufmylated proteins. Ufmylation-dependent reticulophagy inhibits the unfolded protein response (UPR) by regulating ERN1/IRE1-alpha stability. Acts as a regulator of immunity by promoting differentiation of B-cells into plasma cells: acts by promoting expansion of the endoplasmic reticulum and regulating the unfolded protein response (UPR). May also be required for TRIP4 ufmylation. May play a role in NF-kappa-B-mediated transcription through regulation of the phosphorylation and the degradation of NFKBIA, the inhibitor of NF-kappa-B. Plays a role in cartilage development through SOX9, inhibiting the ubiquitin-mediated proteasomal degradation of this transcriptional regulator. Required for stabilization and ufmylation of ATG9A. In Homo sapiens (Human), this protein is DDRGK domain-containing protein 1.